The following is a 149-amino-acid chain: Large ribosomal subunit protein uL13 (149 aa).

Belongs to the universal ribosomal protein uL13 family. Part of the 50S ribosomal subunit.

In terms of biological role, this protein is one of the early assembly proteins of the 50S ribosomal subunit, although it is not seen to bind rRNA by itself. It is important during the early stages of 50S assembly. This is Large ribosomal subunit protein uL13 from Bifidobacterium longum (strain DJO10A).